The primary structure comprises 453 residues: Aminodeoxychorismate synthase component 1 (453 aa).

Residues serine 36, 43–46 (YSRF), and 240–242 (PFS) each bind L-tryptophan. Glutamate 258 (proton donor) is an active-site residue. The N6-(4-deoxychorismate)-lysine intermediate role is filled by lysine 274.

It belongs to the anthranilate synthase component I family. Monomer. Heterodimer consisting of two non-identical subunits: a glutamine amidotransferase subunit (PabA) and a aminodeoxychorismate synthase subunit (PabB). Mg(2+) serves as cofactor.

The catalysed reaction is chorismate + L-glutamine = 4-amino-4-deoxychorismate + L-glutamate. It functions in the pathway cofactor biosynthesis; tetrahydrofolate biosynthesis; 4-aminobenzoate from chorismate: step 1/2. With respect to regulation, inhibited by 6-diazo-5-oxo-L-norleucine (DON). The inhibition is competitive with glutamine but uncompetitive with chorismate. Also inhibited by 2-fluorochorismate. Part of a heterodimeric complex that catalyzes the two-step biosynthesis of 4-amino-4-deoxychorismate (ADC), a precursor of p-aminobenzoate (PABA) and tetrahydrofolate. In the first step, a glutamine amidotransferase (PabA) generates ammonia as a substrate that, along with chorismate, is used in the second step, catalyzed by aminodeoxychorismate synthase (PabB) to produce ADC. PabB, in the absence of PabA, can catalyze the formation of ADC in the presence of exogenous ammonia. In Escherichia coli (strain K12), this protein is Aminodeoxychorismate synthase component 1 (pabB).